We begin with the raw amino-acid sequence, 492 residues long: 3-octaprenyl-4-hydroxybenzoate carboxy-lyase (492 aa).

Asn-175 serves as a coordination point for Mn(2+). Prenylated FMN contacts are provided by residues 178–180, 192–194, and 197–198; these read IYR, RWL, and RG. Position 241 (Glu-241) interacts with Mn(2+). Asp-290 (proton donor) is an active-site residue.

This sequence belongs to the UbiD family. In terms of assembly, homohexamer. It depends on prenylated FMN as a cofactor. Mn(2+) serves as cofactor.

Its subcellular location is the cell membrane. The catalysed reaction is a 4-hydroxy-3-(all-trans-polyprenyl)benzoate + H(+) = a 2-(all-trans-polyprenyl)phenol + CO2. It functions in the pathway cofactor biosynthesis; ubiquinone biosynthesis. Its function is as follows. Catalyzes the decarboxylation of 3-octaprenyl-4-hydroxy benzoate to 2-octaprenylphenol, an intermediate step in ubiquinone biosynthesis. In Salmonella choleraesuis (strain SC-B67), this protein is 3-octaprenyl-4-hydroxybenzoate carboxy-lyase.